Reading from the N-terminus, the 376-residue chain is Neuropeptide receptor 3 (376 aa).

Residues 1–29 (MEGGRNCVMTVQQWQPEYNDMNQIRAIFS) are Extracellular-facing. The helical transmembrane segment at 30–50 (LLYLLVWVGAIVGNTLVLYVL) threads the bilayer. At 51-66 (TFNQVSLSVRTVFVGC) the chain is on the cytoplasmic side. The helical transmembrane segment at 67–87 (LAGSDLLMCLFSLPITAISIF) threads the bilayer. Residues 88–89 (SR) lie on the Extracellular side of the membrane. The chain crosses the membrane as a helical span at residues 90–110 (VWVFPAIFCKLIGVFQGGTIF). A disulfide bridge links C98 with C175. At 111 to 139 (VSSFTLTVIALDRCVLILRPNQEIVNFPR) the chain is on the cytoplasmic side. The chain crosses the membrane as a helical span at residues 140–160 (AVFIVFCIWLLGYSLALPVGI). Over 161-197 (YSDIAVYDEICGTFCEENWPDFNPDTGRSGIRRAYGL) the chain is Extracellular. The chain crosses the membrane as a helical span at residues 198 to 218 (SVLVLQFGIPALISSICYWMI). Over 219–251 (SRVMSDQLARRRGHNIRPESETKLVNRKTRANR) the chain is Cytoplasmic. The chain crosses the membrane as a helical span at residues 252 to 272 (MMIVMVVGFVLAWMPFNAVNL). Topologically, residues 273-284 (YRDLFGISKWYS) are extracellular. A helical transmembrane segment spans residues 285-305 (TVFALCHVCAMCSAVLNPIIY). At 306–376 (SWFNPQFRQS…NDYRAGDQLL (71 aa)) the chain is on the cytoplasmic side.

Belongs to the G-protein coupled receptor 1 family.

The protein resides in the cell membrane. Its function is as follows. G-protein coupled receptor for flp-15 neuropeptides. Receptor activation assays suggest binding to predicted flp-15 peptides, GGPQGPLRF-NH2 and RGPSGPLRF-NH2. Likely involved in Gi/Go-coupled signaling pathways. The sequence is that of Neuropeptide receptor 3 from Caenorhabditis elegans.